The following is a 467-amino-acid chain: Cytochrome c-552 (467 aa).

A signal peptide spans 1–27 (MVKKLTGKSFALSALVAASFVAAGAMA). Residue His-87 participates in heme c binding. Heme contacts are provided by Cys-115, Cys-118, and Lys-119. Residues Cys-153, Cys-156, His-157, Cys-195, Cys-198, and His-199 each contribute to the heme c site. 4 residues coordinate Ca(2+): Glu-201, Tyr-202, Lys-250, and Gln-252. Tyr-202 lines the substrate pocket. His-253 provides a ligand contact to substrate. Heme c is bound by residues His-264, Cys-271, Cys-274, His-275, His-290, Cys-303, Cys-306, His-307, and His-382.

It belongs to the cytochrome c-552 family. The cofactor is Ca(2+). Heme c serves as cofactor.

It is found in the periplasm. The catalysed reaction is 6 Fe(III)-[cytochrome c] + NH4(+) + 2 H2O = 6 Fe(II)-[cytochrome c] + nitrite + 8 H(+). The protein operates within nitrogen metabolism; nitrate reduction (assimilation). Its function is as follows. Catalyzes the reduction of nitrite to ammonia, consuming six electrons in the process. This is Cytochrome c-552 from Shewanella amazonensis (strain ATCC BAA-1098 / SB2B).